Reading from the N-terminus, the 675-residue chain is Vacuolar protein sorting-associated protein 5 (675 aa).

Disordered regions lie at residues 1–26, 65–84, and 165–219; these read MDYE…QSLV, EWKD…EHDN, and RAQR…RREN. Basic residues predominate over residues 168–180; the sequence is RNSKRNHSLKAKR. Basic and acidic residues predominate over residues 195–204; sequence PLKKAEKENE. Residues 279–394 enclose the PX domain; the sequence is VAFKVEVKDP…LFLTSDDFSS (116 aa). A 1,2-diacyl-sn-glycero-3-phospho-(1D-myo-inositol-3-phosphate)-binding residues include arginine 320, lysine 346, and arginine 360.

This sequence belongs to the sorting nexin family. Component of the retromer complex which consists of VPS29, VPS26, VPS35, VPS5 and VPS17. Component of a retromer subcomplex consisting of VPSD5 and VPS17. Post-translationally, phosphorylated on serine residue(s).

It is found in the cytoplasm. The protein localises to the golgi apparatus membrane. It localises to the endosome membrane. In terms of biological role, plays a role in vesicular protein sorting. Required for retention of late Golgi membrane proteins and vacuolar biogenesis. Component of the membrane-associated retromer complex which is essential in endosome-to-Golgi retrograde transport. The VPS5-VPS17 subcomplex may assemble onto the membrane to promote vesicle formation. This chain is Vacuolar protein sorting-associated protein 5 (VPS5), found in Saccharomyces cerevisiae (strain ATCC 204508 / S288c) (Baker's yeast).